The primary structure comprises 216 residues: ATP synthase subunit C lysine N-methyltransferase (216 aa).

M1 is subject to N-acetylmethionine. Over residues 1–12 (MERGETPEEERQ) the composition is skewed to basic and acidic residues. The segment at 1–25 (MERGETPEEERQSGCVLPTSPESDS) is disordered. Residues 31-50 (WGFLITGVIGGALVTVYAVT) traverse the membrane as a helical segment. The required for mitochondrial location stretch occupies residues 51 to 85 (TPFIAPALRKVCLPFVPATSRQVENVVKMLQHRRG).

It belongs to the ANT/ATPSC lysine N-methyltransferase family.

The protein localises to the mitochondrion membrane. It carries out the reaction L-lysyl-[protein] + 3 S-adenosyl-L-methionine = N(6),N(6),N(6)-trimethyl-L-lysyl-[protein] + 3 S-adenosyl-L-homocysteine + 3 H(+). In terms of biological role, mitochondrial protein-lysine N-methyltransferase that trimethylates ATP synthase subunit C, ATP5MC1 and ATP5MC2. Trimethylation is required for proper incorporation of the C subunit into the ATP synthase complex and mitochondrial respiration. Promotes chronic pain. Involved in persistent inflammatory and neuropathic pain: methyltransferase activity in the mitochondria of sensory neurons promotes chronic pain via a pathway that depends on the production of reactive oxygen species (ROS) and on the engagement of spinal cord microglia. This is ATP synthase subunit C lysine N-methyltransferase (Atpsckmt) from Rattus norvegicus (Rat).